The sequence spans 380 residues: Chaperone protein DnaJ (380 aa).

Residues 5-70 (DFYEVLGVSR…QKRAAYDQYG (66 aa)) enclose the J domain. Residues 135-213 (GCEKDIEIPT…CHGDGRVQKT (79 aa)) form a CR-type zinc finger. 8 residues coordinate Zn(2+): Cys148, Cys151, Cys165, Cys168, Cys187, Cys190, Cys201, and Cys204. 4 CXXCXGXG motif repeats span residues 148–155 (CEPCDGTG), 165–172 (CSTCHGQG), 187–194 (CPTCHGKG), and 201–208 (CNSCHGDG).

The protein belongs to the DnaJ family. Homodimer. Requires Zn(2+) as cofactor.

The protein localises to the cytoplasm. Participates actively in the response to hyperosmotic and heat shock by preventing the aggregation of stress-denatured proteins and by disaggregating proteins, also in an autonomous, DnaK-independent fashion. Unfolded proteins bind initially to DnaJ; upon interaction with the DnaJ-bound protein, DnaK hydrolyzes its bound ATP, resulting in the formation of a stable complex. GrpE releases ADP from DnaK; ATP binding to DnaK triggers the release of the substrate protein, thus completing the reaction cycle. Several rounds of ATP-dependent interactions between DnaJ, DnaK and GrpE are required for fully efficient folding. Also involved, together with DnaK and GrpE, in the DNA replication of plasmids through activation of initiation proteins. The sequence is that of Chaperone protein DnaJ from Aliivibrio salmonicida (strain LFI1238) (Vibrio salmonicida (strain LFI1238)).